Here is a 141-residue protein sequence, read N- to C-terminus: Large ribosomal subunit protein uL16 (141 aa).

Residues 1–21 (MLMPKRTKFRKQMKGRNRGKS) are compositionally biased toward basic residues. A disordered region spans residues 1 to 22 (MLMPKRTKFRKQMKGRNRGKSF).

It belongs to the universal ribosomal protein uL16 family. Part of the 50S ribosomal subunit.

Binds 23S rRNA and is also seen to make contacts with the A and possibly P site tRNAs. The chain is Large ribosomal subunit protein uL16 from Wolinella succinogenes (strain ATCC 29543 / DSM 1740 / CCUG 13145 / JCM 31913 / LMG 7466 / NCTC 11488 / FDC 602W) (Vibrio succinogenes).